Reading from the N-terminus, the 362-residue chain is 3-dehydroquinate synthase (362 aa).

NAD(+) is bound by residues 70 to 75 (DGEKYK), 104 to 108 (GVIGD), 128 to 129 (TT), K141, K150, and 168 to 171 (TLNT). Zn(2+) contacts are provided by E183, H246, and H263.

The protein belongs to the sugar phosphate cyclases superfamily. Dehydroquinate synthase family. The cofactor is NAD(+). Co(2+) is required as a cofactor. It depends on Zn(2+) as a cofactor.

The protein resides in the cytoplasm. The catalysed reaction is 7-phospho-2-dehydro-3-deoxy-D-arabino-heptonate = 3-dehydroquinate + phosphate. The protein operates within metabolic intermediate biosynthesis; chorismate biosynthesis; chorismate from D-erythrose 4-phosphate and phosphoenolpyruvate: step 2/7. Catalyzes the conversion of 3-deoxy-D-arabino-heptulosonate 7-phosphate (DAHP) to dehydroquinate (DHQ). This chain is 3-dehydroquinate synthase, found in Haemophilus influenzae (strain ATCC 51907 / DSM 11121 / KW20 / Rd).